A 662-amino-acid polypeptide reads, in one-letter code: MDSSTWSPATTATTEPLKPHERIRNAADISVIVIYFVVVMAVGLWAMCSTNRGTVGGFFLAGRSMVWWPVGASLFASNIGSGHFVGLAGTGAAAGIATGGFEWNALIWVVVLGWLFVPIYIKAGVVTMPEYLRKRFGGKRIQVYLSILSLMLYIFTKISADIFSGAIFITLALGLDLYLAIFLLLAITGLYTITGGLAAVIYTDTLQTAIMLVGSFILTGFAFHEVGGYDAFMEKYMNAIPTVISDGNITIKKECYTPRADSFHIFRDPLKGDLPWPGLTFGLSILALWYWCTDQVIVQRCLSAKNMSHVKAGCVMCGYFKLLPMFVIVMPGMISRVLYTEKIACTVPSECEKYCGTKVGCSNIAYPTLVVELMPNGLRGLMLSVMLASLMSSLTSIFNSASTLFTMDVYTKIRKRASEKELMIAGRLFILVLIGISIAWVPIVQSAQSGQLFDYIQSVTSYLGPPIAAVFLLAIFCKRVNEEGAFWGLVIGCMIGLARMITEFAYGTGSCVEPSNCPTIICGVHYLYFAIILFVISIIIVLVVSLFTKPIPDVHLYRLCWSLRNSKEERIDLDAEEEDIQEAPEETIEIEVPEEKKGCFRRTYDLFCGLDQQKGPKMTKEEEAAMKLKMTDTSEKPLWRTVVNINGIILLTVAVFCHAYFA.

At 1-24 (MDSSTWSPATTATTEPLKPHERIR) the chain is on the extracellular side. A helical membrane pass occupies residues 25-47 (NAADISVIVIYFVVVMAVGLWAM). Over 48 to 66 (CSTNRGTVGGFFLAGRSMV) the chain is Cytoplasmic. Residues 67-90 (WWPVGASLFASNIGSGHFVGLAGT) form a helical membrane-spanning segment. Over 91–95 (GAAAG) the chain is Extracellular. The chain crosses the membrane as a helical span at residues 96–117 (IATGGFEWNALIWVVVLGWLFV). At 118–139 (PIYIKAGVVTMPEYLRKRFGGK) the chain is on the cytoplasmic side. The chain crosses the membrane as a helical span at residues 140–169 (RIQVYLSILSLMLYIFTKISADIFSGAIFI). Topologically, residues 170–176 (TLALGLD) are extracellular. A helical membrane pass occupies residues 177–193 (LYLAIFLLLAITGLYTI). Residues 194–202 (TGGLAAVIY) lie on the Cytoplasmic side of the membrane. A helical transmembrane segment spans residues 203–221 (TDTLQTAIMLVGSFILTGF). At 222-275 (AFHEVGGYDAFMEKYMNAIPTVISDGNITIKKECYTPRADSFHIFRDPLKGDLP) the chain is on the extracellular side. Asn248 carries N-linked (GlcNAc...) asparagine glycosylation. 5 cysteine pairs are disulfide-bonded: Cys255/Cys511, Cys255/Cys608, Cys345/Cys351, Cys355/Cys361, and Cys517/Cys522. A helical membrane pass occupies residues 276–295 (WPGLTFGLSILALWYWCTDQ). Over 296–309 (VIVQRCLSAKNMSH) the chain is Cytoplasmic. The chain crosses the membrane as a helical span at residues 310-331 (VKAGCVMCGYFKLLPMFVIVMP). At 332-375 (GMISRVLYTEKIACTVPSECEKYCGTKVGCSNIAYPTLVVELMP) the chain is on the extracellular side. A helical membrane pass occupies residues 376-406 (NGLRGLMLSVMLASLMSSLTSIFNSASTLFT). Over 407–422 (MDVYTKIRKRASEKEL) the chain is Cytoplasmic. A helical transmembrane segment spans residues 423–444 (MIAGRLFILVLIGISIAWVPIV). The Extracellular segment spans residues 445 to 451 (QSAQSGQ). The helical transmembrane segment at 452–477 (LFDYIQSVTSYLGPPIAAVFLLAIFC) threads the bilayer. Residues 478–481 (KRVN) are Cytoplasmic-facing. The helical transmembrane segment at 482-504 (EEGAFWGLVIGCMIGLARMITEF) threads the bilayer. The Extracellular segment spans residues 505–525 (AYGTGSCVEPSNCPTIICGVH). A helical transmembrane segment spans residues 526-547 (YLYFAIILFVISIIIVLVVSLF). Over 548-642 (TKPIPDVHLY…TSEKPLWRTV (95 aa)) the chain is Cytoplasmic. Phosphothreonine is present on Thr587. A helical transmembrane segment spans residues 643–660 (VNINGIILLTVAVFCHAY). Residues 661–662 (FA) lie on the Extracellular side of the membrane.

It belongs to the sodium:solute symporter (SSF) (TC 2.A.21) family. Post-translationally, N-glycosylation is not necessary for the cotransporter function.

It is found in the apical cell membrane. It carries out the reaction D-glucose(out) + 2 Na(+)(out) = D-glucose(in) + 2 Na(+)(in). The enzyme catalyses D-galactose(out) + 2 Na(+)(out) = D-galactose(in) + 2 Na(+)(in). Its activity is regulated as follows. Enhanced by the interaction with PDZK1IP1/MAP17; but unlike SLC5A2/SGLT2, PDZK1IP1 is not essential for SLC5A1 transporter activity. Possibly modulated by cholesterol binding. Electrogenic Na(+)-coupled sugar symporter that actively transports D-glucose or D-galactose at the plasma membrane, with a Na(+) to sugar coupling ratio of 2:1. Transporter activity is driven by a transmembrane Na(+) electrochemical gradient set by the Na(+)/K(+) pump. Has a primary role in the transport of dietary monosaccharides from enterocytes to blood. Responsible for the absorption of D-glucose or D-galactose across the apical brush-border membrane of enterocytes, whereas basolateral exit is provided by GLUT2. Additionally, functions as a D-glucose sensor in enteroendocrine cells, triggering the secretion of the incretins GCG and GIP that control food intake and energy homeostasis. Together with SGLT2, functions in reabsorption of D-glucose from glomerular filtrate, playing a nonredundant role in the S3 segment of the proximal tubules. Transports D-glucose into endometrial epithelial cells, controlling glycogen synthesis and nutritional support for the embryo as well as the decidual transformation of endometrium prior to conception. Acts as a water channel enabling passive water transport in response to the osmotic gradient created upon sugar and Na(+) uptake. Has high water conductivity comparable to aquaporins and therefore is expected to play an important role in transepithelial water permeability, especially in the small intestine. This chain is Sodium/glucose cotransporter 1 (SLC5A1), found in Sus scrofa (Pig).